A 1019-amino-acid polypeptide reads, in one-letter code: Probable ubiquitination network signaling protein acrB (1019 aa).

A disordered region spans residues 1–142 (MPRSSATARK…TGNKRSPSNA (142 aa)). Positions 33 to 63 (NGHLNGNLNGGSASSSLSSSQVDLPSSRSSS) are enriched in low complexity. Composition is skewed to polar residues over residues 68 to 83 (PTTT…TPDS), 102 to 117 (TDMS…SQTG), and 131 to 142 (SATGNKRSPSNA). 3 consecutive transmembrane segments (helical) span residues 163 to 183 (IAIL…VQFL), 216 to 236 (LGTM…FMWT), and 259 to 279 (FGKN…MHLV). 5 disordered regions span residues 343-372 (ARRS…GSQT), 580-603 (DAEQ…PTTT), 831-859 (LDPG…GALT), 879-905 (SPLQ…PSYL), and 963-1019 (DKRS…GKTN). A coiled-coil region spans residues 602–788 (TTLKNSIVNA…REQDQAKLEA (187 aa)). The span at 992-1008 (RGSGSGSNGSGGSGSGS) shows a compositional bias: gly residues.

Belongs to the acrB family.

The protein localises to the membrane. Component of the regulatory network controlling carbon source utilization through ubiquitination and deubiquitination involving creA, creB, creC, creD and acrB. Involved in resistance to acriflavine, and required for normal growth on a range of sole carbon sources, including fructose, cellobiose, raffinose, and starch, and reduced utilization of amino acids, including GABA and beta-alanine, as sole carbon and nitrogen sources. This chain is Probable ubiquitination network signaling protein acrB (acrB), found in Neosartorya fischeri (strain ATCC 1020 / DSM 3700 / CBS 544.65 / FGSC A1164 / JCM 1740 / NRRL 181 / WB 181) (Aspergillus fischerianus).